Here is a 449-residue protein sequence, read N- to C-terminus: Signal recognition particle protein (449 aa).

GTP-binding positions include 109–116 (GLQGGGKT), 191–195 (DTAGR), and 249–252 (SRID).

This sequence belongs to the GTP-binding SRP family. SRP54 subfamily. Part of the signal recognition particle protein translocation system, which is composed of SRP and FtsY. SRP is a ribonucleoprotein composed of Ffh and a 4.5S RNA molecule.

It localises to the cytoplasm. The enzyme catalyses GTP + H2O = GDP + phosphate + H(+). Its function is as follows. Involved in targeting and insertion of nascent membrane proteins into the cytoplasmic membrane. Binds to the hydrophobic signal sequence of the ribosome-nascent chain (RNC) as it emerges from the ribosomes. The SRP-RNC complex is then targeted to the cytoplasmic membrane where it interacts with the SRP receptor FtsY. Interaction with FtsY leads to the transfer of the RNC complex to the Sec translocase for insertion into the membrane, the hydrolysis of GTP by both Ffh and FtsY, and the dissociation of the SRP-FtsY complex into the individual components. In Rickettsia typhi (strain ATCC VR-144 / Wilmington), this protein is Signal recognition particle protein.